Consider the following 382-residue polypeptide: Lipid-A-disaccharide synthase (382 aa).

It belongs to the LpxB family.

It catalyses the reaction 2-N,3-O-bis[(3R)-3-hydroxytetradecanoyl]-alpha-D-glucosaminyl 1-phosphate + UDP-2-N,3-O-bis[(3R)-3-hydroxytetradecanoyl]-alpha-D-glucosamine = lipid A disaccharide (E. coli) + UDP + H(+). It carries out the reaction a lipid X + a UDP-2-N,3-O-bis[(3R)-3-hydroxyacyl]-alpha-D-glucosamine = a lipid A disaccharide + UDP + H(+). It functions in the pathway glycolipid biosynthesis; lipid IV(A) biosynthesis; lipid IV(A) from (3R)-3-hydroxytetradecanoyl-[acyl-carrier-protein] and UDP-N-acetyl-alpha-D-glucosamine: step 5/6. Its function is as follows. Condensation of UDP-2,3-diacylglucosamine and 2,3-diacylglucosamine-1-phosphate to form lipid A disaccharide, a precursor of lipid A, a phosphorylated glycolipid that anchors the lipopolysaccharide to the outer membrane of the cell. This Escherichia coli (strain K12 / MC4100 / BW2952) protein is Lipid-A-disaccharide synthase.